The following is a 254-amino-acid chain: MKGRMKLRLVLDTHTHTIASGHAFSTIIENAREAFRKGLQLICITDHGPEMPGGPHIYYFGNLKVIPEKIEGVEILKGVEANIMDEEGRIDLPERILKKLDIVIASLHDECFEPSEDVERNTKALINAIKNPYVDIIGHPGNPIYPIDIERVLEAAKEYGKFIEINNSSFVTSRRGSEKICPIIAGKAKEMGVRVAVGSDAHICFDVGRFDEAIRLLEDINMPEELVLNTSVDKVKQYLQEKRKRIGGGQNSWN.

His14, His16, His22, His47, Glu80, His108, His139, Asp200, and His202 together coordinate Zn(2+).

The protein belongs to the PHP family. It depends on Zn(2+) as a cofactor.

The chain is Probable phosphatase TTE1963 from Caldanaerobacter subterraneus subsp. tengcongensis (strain DSM 15242 / JCM 11007 / NBRC 100824 / MB4) (Thermoanaerobacter tengcongensis).